Here is a 100-residue protein sequence, read N- to C-terminus: Urease subunit gamma (100 aa).

The protein belongs to the urease gamma subunit family. As to quaternary structure, heterotrimer of UreA (gamma), UreB (beta) and UreC (alpha) subunits. Three heterotrimers associate to form the active enzyme.

It localises to the cytoplasm. The catalysed reaction is urea + 2 H2O + H(+) = hydrogencarbonate + 2 NH4(+). It functions in the pathway nitrogen metabolism; urea degradation; CO(2) and NH(3) from urea (urease route): step 1/1. This chain is Urease subunit gamma, found in Acinetobacter baumannii (strain SDF).